The sequence spans 128 residues: Glycine cleavage system H protein (128 aa).

Residues 25–107 form the Lipoyl-binding domain; it reads IITVGITHHA…YGAGWFFKLK (83 aa). Lys-66 is subject to N6-lipoyllysine.

Belongs to the GcvH family. The glycine cleavage system is composed of four proteins: P, T, L and H. Requires (R)-lipoate as cofactor.

In terms of biological role, the glycine cleavage system catalyzes the degradation of glycine. The H protein shuttles the methylamine group of glycine from the P protein to the T protein. This chain is Glycine cleavage system H protein, found in Neisseria meningitidis serogroup A / serotype 4A (strain DSM 15465 / Z2491).